We begin with the raw amino-acid sequence, 142 residues long: Large ribosomal subunit protein uL11 (142 aa).

The protein belongs to the universal ribosomal protein uL11 family. Part of the ribosomal stalk of the 50S ribosomal subunit. Interacts with L10 and the large rRNA to form the base of the stalk. L10 forms an elongated spine to which L12 dimers bind in a sequential fashion forming a multimeric L10(L12)X complex. Post-translationally, one or more lysine residues are methylated.

Its function is as follows. Forms part of the ribosomal stalk which helps the ribosome interact with GTP-bound translation factors. This is Large ribosomal subunit protein uL11 from Enterobacter sp. (strain 638).